A 296-amino-acid chain; its full sequence is CCAAT/enhancer-binding protein beta (296 aa).

The required for Lys-133 sumoylation stretch occupies residues 1-22; the sequence is MHRLLAWDAACLPPPPAAFRPM. Arginine 3 carries the asymmetric dimethylarginine; by CARM1 modification. Positions 22-104 are required for MYC transcriptional repression; sequence MEVANFYYEP…YGAKPSKKPA (83 aa). At lysine 39 the chain carries N6-acetyllysine; alternate. N6-methylated lysine; alternate is present on lysine 39. 2 positions are modified to N6-acetyllysine; by KAT2A and KAT2B: lysine 98 and lysine 101. At lysine 102 the chain carries N6-acetyllysine; by KAT2A and KAT2B; alternate. Residues lysine 102 and lysine 133 each participate in a glycyl lysine isopeptide (Lys-Gly) (interchain with G-Cter in SUMO2); alternate cross-link. A Glycyl lysine isopeptide (Lys-Gly) (interchain with G-Cter in SUMO); alternate cross-link involves residue lysine 133. A Glycyl lysine isopeptide (Lys-Gly) (interchain with G-Cter in SUMO2) cross-link involves residue lysine 144. Residues 171 to 199 form a disordered region; the sequence is SGSSGSLSTSSSSSPPGTPSPADAKAAPA. Threonine 179 is subject to Phosphothreonine; by GSK3-beta. O-linked (GlcNAc) serine glycosylation is found at serine 180 and serine 181. Serine 184 is modified (phosphoserine; by GSK3-beta). Phosphothreonine; by RPS6KA1, CDK2 and MAPK is present on threonine 188. Glycyl lysine isopeptide (Lys-Gly) (interchain with G-Cter in SUMO2) cross-links involve residues lysine 211 and lysine 213. The residue at position 217 (threonine 217) is a Phosphothreonine; by RPS6KA1 and PKC/PRKCA. The bZIP domain occupies 222–285; sequence SDEYKMRRER…STLRNLFKQL (64 aa). Positions 226 to 246 are basic motif; the sequence is KMRRERNNIAVRKSRDKAKMR. Serine 239 carries the phosphoserine; by PKC/PRKCA modification. The interval 248–255 is leucine-zipper; sequence LETQHKVL. Residue serine 276 is modified to Phosphoserine; by CaMK2. Lysine 283 participates in a covalent cross-link: Glycyl lysine isopeptide (Lys-Gly) (interchain with G-Cter in SUMO2).

This sequence belongs to the bZIP family. C/EBP subfamily. Binds DNA as a homodimer and as a heterodimer. Interacts with ATF4. Binds DNA as a heterodimer with ATF4. Interacts with MYB; within the complex, MYB and CEBPB bind to different promoter regions. Can form stable heterodimers with CEBPA, CEBPD and CEBPE. Interacts with SIX1. Isoform 2 and isoform 3 also form heterodimers. Interacts with TRIM28 and PTGES2. Interacts with PRDM16. Interacts with CCDC85B. Forms a complex with THOC5. Interacts with ZNF638; this interaction increases transcriptional activation. Interacts with CIDEA and CIDEC. Interaction with CIDEA increases transcriptional activation of a subset of CEBPB downstream target genes, including ID2, IGF1, PRLR, SOCS1, SOCS3, XDH. Interaction with CIDEC increases transcriptional activation of SOCS1, SOCS3, TGFB1, TGFBR1, ID2 and XDH. Interacts with DDIT3/CHOP. Interacts with EP300; recruits EP300 to chromatin. Interacts with RORA; the interaction disrupts interaction with EP300. Interacts (not methylated) with MED23, MED26, SMARCA2, SMARCB1 and SMARCC1. Interacts with KAT2A and KAT2B. Interacts with ATF5; EP300 is required for ATF5 and CEBPB interaction and DNA binding. Interacts with NFE2L1; the heterodimer represses expression of DSPP during odontoblast differentiation. In terms of processing, sumoylated by polymeric chains of SUMO2 or SUMO3. Sumoylation at Lys-133 is required for inhibition of T-cells proliferation. In adipocytes, sumoylation at Lys-133 by PIAS1 leads to ubiquitination and subsequent proteasomal degradation. Desumoylated by SENP2, which abolishes ubiquitination and stabilizes protein levels. Ubiquitinated, leading to proteasomal degradation. Post-translationally, phosphorylated at Thr-188 by MAPK and CDK2, serves to prime phosphorylation at Thr-179 and Ser-184 by GSK3B and acquire DNA-binding as well as transactivation activities, required to induce adipogenesis. MAPK and CDK2 act sequentially to maintain Thr-188 in the primed phosphorylated state during mitotical cloning expansion and thereby progression of terminal differentiation. Phosphorylation at Thr-217 enhances transactivation activity. Phosphorylation at Ser-276 in response to calcium increases transactivation activity. Phosphorylated at Thr-188 by RPS6KA1. In terms of processing, O-glycosylated, glycosylation at Ser-180 and Ser-181 prevents phosphorylation on Thr-188, Ser-184 and Thr-179 and DNA binding activity which delays the adipocyte differentiation program. Acetylated. Acetylation at Lys-39 is an important and dynamic regulatory event that contributes to its ability to transactivate target genes, including those associated with adipogenesis and adipocyte function. Deacetylation by HDAC1 represses its transactivation activity. Acetylated by KAT2A and KAT2B within a cluster of lysine residues between amino acids 98-102, this acetylation is strongly induced by glucocorticoid treatment and enhances transactivation activity. Post-translationally, methylated. Methylation at Arg-3 by CARM1 and at Lys-39 by EHMT2, inhibits transactivation activity. Methylation is probably inhibited by phosphorylation at Thr-188. Abundantly expressed in myoblasts. Enriched in brown adipose tissue (BAT) versus white adipose tissue (WAT). Expressed in hepatocytes (at protein level). Expressed in T lymphocytes. The expression in granulosa cells of antral follicles is induced by luteinizing hormone. Expressed in chondrocytes and osteoblasts (at protein level).

It is found in the nucleus. The protein localises to the cytoplasm. Functionally, important transcription factor regulating the expression of genes involved in immune and inflammatory responses. Also plays a significant role in adipogenesis, as well as in the gluconeogenic pathway, liver regeneration, and hematopoiesis. The consensus recognition site is 5'-T[TG]NNGNAA[TG]-3'. Its functional capacity is governed by protein interactions and post-translational protein modifications. During early embryogenesis, plays essential and redundant roles with CEBPA. Has a promitotic effect on many cell types such as hepatocytes and adipocytes but has an antiproliferative effect on T-cells by repressing MYC expression, facilitating differentiation along the T-helper 2 lineage. Binds to regulatory regions of several acute-phase and cytokines genes and plays a role in the regulation of acute-phase reaction and inflammation. Also plays a role in intracellular bacteria killing. During adipogenesis, is rapidly expressed and, after activation by phosphorylation, induces CEBPA and PPARG, which turn on the series of adipocyte genes that give rise to the adipocyte phenotype. The delayed transactivation of the CEBPA and PPARG genes by CEBPB appears necessary to allow mitotic clonal expansion and thereby progression of terminal differentiation. Essential for female reproduction because of a critical role in ovarian follicle development. Restricts osteoclastogenesis. Together with NFE2L1; represses expression of DSPP during odontoblast differentiation. Its function is as follows. Essential for gene expression induction in activated macrophages. Plays a major role in immune responses such as CD4(+) T-cell response, granuloma formation and endotoxin shock. Not essential for intracellular bacteria killing. Acts as a dominant negative through heterodimerization with isoform 2. Promotes osteoblast differentiation and osteoclastogenesis. This Mus musculus (Mouse) protein is CCAAT/enhancer-binding protein beta.